A 510-amino-acid polypeptide reads, in one-letter code: NAD(P)H-quinone oxidoreductase subunit 2 B, chloroplastic (510 aa).

A run of 14 helical transmembrane segments spans residues 24 to 44 (LLLF…GLIL), 59 to 79 (WFYF…LFRW), 99 to 119 (IFQF…VEYI), 124 to 144 (MAIT…MFLC), 149 to 169 (LITI…LSGY), 184 to 204 (LLMG…LYGL), 229 to 249 (ISIA…LAPF), 261 to 281 (PTPV…ALAT), 295 to 315 (WHLL…LLAI), 323 to 343 (MLAY…IVGD), 354 to 374 (YMLF…LFGL), 395 to 415 (ALSL…AGFF), 418 to 438 (LYLF…IGLL), and 484 to 504 (MTVC…ILAI).

The protein belongs to the complex I subunit 2 family. In terms of assembly, NDH is composed of at least 16 different subunits, 5 of which are encoded in the nucleus.

It is found in the plastid. Its subcellular location is the chloroplast thylakoid membrane. The catalysed reaction is a plastoquinone + NADH + (n+1) H(+)(in) = a plastoquinol + NAD(+) + n H(+)(out). It catalyses the reaction a plastoquinone + NADPH + (n+1) H(+)(in) = a plastoquinol + NADP(+) + n H(+)(out). Functionally, NDH shuttles electrons from NAD(P)H:plastoquinone, via FMN and iron-sulfur (Fe-S) centers, to quinones in the photosynthetic chain and possibly in a chloroplast respiratory chain. The immediate electron acceptor for the enzyme in this species is believed to be plastoquinone. Couples the redox reaction to proton translocation, and thus conserves the redox energy in a proton gradient. The sequence is that of NAD(P)H-quinone oxidoreductase subunit 2 B, chloroplastic from Zea mays (Maize).